The sequence spans 276 residues: MSNKHGHQARKRFGQNFLHDPGVIERIVRAINPKPEDSIVEIGPGLGAITEEILAINPRLQVVELDRDLIPVLRTKFFNYPEFRIHEADALSFDFSQLVSDRPLRIVGNLPYNISTPLIFHLLSQSGVVQDMHFMLQKEVVQRLAAVPGDNNYGRLGIMAQYFCKVQPLFEVGPGAFRPAPKVDSAIVRLVPHKELPYPAKDLKTLQAVVRTAFNARRKTLRKALAAMVTVEQLQSLGINDGLRPENLGLADYVRIADLLADTGKLQADDNEVSDD.

6 residues coordinate S-adenosyl-L-methionine: N16, L18, G43, E64, D89, and N109.

It belongs to the class I-like SAM-binding methyltransferase superfamily. rRNA adenine N(6)-methyltransferase family. RsmA subfamily.

The protein resides in the cytoplasm. The catalysed reaction is adenosine(1518)/adenosine(1519) in 16S rRNA + 4 S-adenosyl-L-methionine = N(6)-dimethyladenosine(1518)/N(6)-dimethyladenosine(1519) in 16S rRNA + 4 S-adenosyl-L-homocysteine + 4 H(+). In terms of biological role, specifically dimethylates two adjacent adenosines (A1518 and A1519) in the loop of a conserved hairpin near the 3'-end of 16S rRNA in the 30S particle. May play a critical role in biogenesis of 30S subunits. The chain is Ribosomal RNA small subunit methyltransferase A from Marinobacter nauticus (strain ATCC 700491 / DSM 11845 / VT8) (Marinobacter aquaeolei).